The primary structure comprises 163 residues: Beta-lactoglobulin-2 (163 aa).

Cystine bridges form between C66/C161 and C106/C120.

This sequence belongs to the calycin superfamily. Lipocalin family. In terms of assembly, monomer.

Its subcellular location is the secreted. Functionally, lactoglobulin is the primary component of whey, it binds retinol and is probably involved in the transport of that molecule. The chain is Beta-lactoglobulin-2 (LGB2) from Felis catus (Cat).